Consider the following 81-residue polypeptide: Dermaseptin-B2 (81 aa).

A signal peptide spans 1-22; that stretch reads MAFLKKSLFLVLFLGLVSLSIC. Residues 23–43 constitute a propeptide that is removed on maturation; the sequence is EEEKRENEDEEEQEDDEQSEM. The segment at 24–46 is disordered; sequence EEKRENEDEEEQEDDEQSEMKRG. Acidic residues predominate over residues 30–40; the sequence is EDEEEQEDDEQ. A hinge region that separates the two alpha-helices that constitute the peptide region spans residues 54–55; sequence VG. Valine amide is present on valine 78. Residues 80–81 constitute a propeptide that is removed on maturation; it reads EQ.

In terms of processing, amidation permits an increased antimicrobial activity against some microorganisms such as T.album and S.cerevisiae. Post-translationally, may contain a D-amino acid residue, since the natural peptide is not identical in chromatographic properties to the synthetic peptide. In terms of tissue distribution, expressed by the skin glands.

It localises to the secreted. The protein localises to the target cell membrane. In terms of biological role, cationic amphipathic alpha-helical antimicrobial peptide with potent activity against Gram-negative and Gram-positive bacteria, fungi and protozoa. Acts in a synergistic effect in combination with Plasticin-B1 at doses that are not active alone. Acts by disturbing membrane functions. On model membranes, induces a strong perturbation of anionic lipid bilayers, resides at the hydrocarbon core-water interface, parallel to the plane of the membrane, and interacts preferentially with the polar head groups and glycerol backbone region of the anionic phospholipids, as well as the region of the lipid acyl chain near the bilayer surface. Induces a positive curvature of the bilayer and clustering of anionic lipids, consistent with a carpet mechanism, that may lead to the formation of mixed peptide-phospholipid toroidal, transient pores and membrane permeation/disruption once a threshold peptide accumulation is reached. Also enhances binding of agonists to adenosine A1 receptors (ADORA1), adenosine A2a receptors (ADORA2A), alpha-2 adrenergic receptors (ADRA2A) and 5-hydroxytryptamine 1A receptors (HTR1A). In addition, it enhances guanyl nucleotide exchange which may result in the conversion of receptors to a high affinity state complexed with guanyl nucleotide free G-protein. Affects human behavior eliciting profound malaise, followed by listlessness and then euphoria. Does not show cytotoxic activity on CHO cells. Does not act as a chemoattractant. Does not show hemolytic activity. The polypeptide is Dermaseptin-B2 (ADR) (Phyllomedusa bicolor (Two-colored leaf frog)).